Consider the following 492-residue polypeptide: Catalase-1 (492 aa).

Catalysis depends on residues His-65 and Asn-138. Tyr-348 provides a ligand contact to heme.

Belongs to the catalase family. In terms of assembly, homotetramer. Heme is required as a cofactor.

It localises to the peroxisome. It is found in the glyoxysome. The enzyme catalyses 2 H2O2 = O2 + 2 H2O. Occurs in almost all aerobically respiring organisms and serves to protect cells from the toxic effects of hydrogen peroxide. The chain is Catalase-1 (CAT1) from Triticum aestivum (Wheat).